A 307-amino-acid chain; its full sequence is Taste receptor type 2 member 41 (307 aa).

The Extracellular portion of the chain corresponds to 1–7 (MQAALTA). A helical transmembrane segment spans residues 8-28 (FFMLFFSLLSLLGIAANGFIV). The Cytoplasmic portion of the chain corresponds to 29–40 (LVLGREWLQYGR). The chain crosses the membrane as a helical span at residues 41–61 (LLPLDMILISLGVSRFCLQLV). The Extracellular segment spans residues 62-88 (GTVYNFYYSAHKVEYSGGLSRQFFHLH). A helical membrane pass occupies residues 89-109 (WHFLNLATFXFCSWLSVLFCV). Residues 110–129 (KXANITHPTFLWLKWRFPGW) lie on the Cytoplasmic side of the membrane. Residues 130–150 (VPWLLLGSVLISFIITLLLFW) traverse the membrane as a helical segment. Over 151–183 (VNYPVYQEFLIRKFSGNMTYEWNTRIEMYYLPS) the chain is Extracellular. Asn-167 is a glycosylation site (N-linked (GlcNAc...) asparagine). The chain crosses the membrane as a helical span at residues 184–204 (LKLVIWSIPCSVFLVSIMLLI). Topologically, residues 205 to 234 (NSLRRHTWRMQHNGHSLQDPSTQAHTRAXK) are cytoplasmic. A helical membrane pass occupies residues 235-255 (SLISFLILYVLSFLSLIIDAT). The Extracellular portion of the chain corresponds to 256-264 (KFISMQNDF). The helical transmembrane segment at 265–285 (YWPWQTAVYLGVSVHPFILIF) threads the bilayer. Residues 286 to 307 (SNLKLRSVFWKLLLLARGFWVA) lie on the Cytoplasmic side of the membrane.

Belongs to the G-protein coupled receptor T2R family.

The protein resides in the membrane. Functionally, receptor that may play a role in the perception of bitterness and is gustducin-linked. May play a role in sensing the chemical composition of the gastrointestinal content. The activity of this receptor may stimulate alpha gustducin, mediate PLC-beta-2 activation and lead to the gating of TRPM5. This Pongo pygmaeus (Bornean orangutan) protein is Taste receptor type 2 member 41 (TAS2R41).